Consider the following 108-residue polypeptide: Probable 4-amino-4-deoxy-L-arabinose-phosphoundecaprenol flippase subunit ArnE (108 aa).

3 helical membrane passes run 36–56, 58–78, and 85–105; these read SLWL…LVLQ, LDVG…TLAG, and PVDV…FQLG.

Belongs to the ArnE family. In terms of assembly, heterodimer of ArnE and ArnF.

The protein localises to the cell inner membrane. It participates in bacterial outer membrane biogenesis; lipopolysaccharide biosynthesis. Functionally, translocates 4-amino-4-deoxy-L-arabinose-phosphoundecaprenol (alpha-L-Ara4N-phosphoundecaprenol) from the cytoplasmic to the periplasmic side of the inner membrane. This chain is Probable 4-amino-4-deoxy-L-arabinose-phosphoundecaprenol flippase subunit ArnE, found in Pseudomonas syringae pv. syringae (strain B728a).